The following is a 322-amino-acid chain: (12E)-labda-8(17),12,14-triene synthase (322 aa).

Polar residues predominate over residues M1–P11. The segment at M1–P26 is disordered. Residues D93 and E98 each contribute to the Mg(2+) site. Positions D93 to E98 match the DDXXXE motif motif. Residue R188 participates in substrate binding. Residues N234 and S238 each coordinate Mg(2+). The NXXXSXXXE motif motif lies at N234–E242. K241 contacts substrate. E242 contacts Mg(2+). R319–Y320 is a substrate binding site.

Belongs to the terpene synthase family. Mg(2+) is required as a cofactor.

The catalysed reaction is (+)-copalyl diphosphate = (12E)-labda-8(17),12,14-triene + diphosphate. In terms of biological role, involved in the biosynthesis of the labdane-type bicyclic diterpene labda-8(17),12(E),14-triene. Catalyzes the conversion of (+)-copalyl diphosphate to yield labda-8(17),12(E),14-triene. This Streptomyces anulatus (Streptomyces chrysomallus) protein is (12E)-labda-8(17),12,14-triene synthase.